Reading from the N-terminus, the 263-residue chain is Endonuclease 8 (263 aa).

The Schiff-base intermediate with DNA role is filled by Pro2. The Proton donor role is filled by Glu3. Catalysis depends on Lys53, which acts as the Proton donor; for beta-elimination activity. Residues Gln70, Arg125, and Asn169 each coordinate DNA. Residues 229 to 263 (KLFHRDGEACERCGGIIEKTTLSSRPFYWCPHCQK) form an FPG-type zinc finger. Arg253 acts as the Proton donor; for delta-elimination activity in catalysis.

It belongs to the FPG family. Zn(2+) is required as a cofactor.

It carries out the reaction 2'-deoxyribonucleotide-(2'-deoxyribose 5'-phosphate)-2'-deoxyribonucleotide-DNA = a 3'-end 2'-deoxyribonucleotide-(2,3-dehydro-2,3-deoxyribose 5'-phosphate)-DNA + a 5'-end 5'-phospho-2'-deoxyribonucleoside-DNA + H(+). Functionally, involved in base excision repair of DNA damaged by oxidation or by mutagenic agents. Acts as a DNA glycosylase that recognizes and removes damaged bases. Has a preference for oxidized pyrimidines, such as thymine glycol, 5,6-dihydrouracil and 5,6-dihydrothymine. Has AP (apurinic/apyrimidinic) lyase activity and introduces nicks in the DNA strand. Cleaves the DNA backbone by beta-delta elimination to generate a single-strand break at the site of the removed base with both 3'- and 5'-phosphates. This is Endonuclease 8 from Salmonella typhimurium (strain SL1344).